Here is a 356-residue protein sequence, read N- to C-terminus: Phospho-N-acetylmuramoyl-pentapeptide-transferase (356 aa).

Helical transmembrane passes span 27–47 (ATLM…INML), 73–93 (TMGG…WMDL), 97–117 (FVWA…LDDL), 138–158 (FLVA…WLYV), 165–185 (AIPL…GAGN), 195–215 (GLAI…AYLA), 232–252 (AGEL…FLWF), 258–278 (AVFM…AIAV), 284–304 (IVLA…IIQV), and 333–353 (KVVI…LATL).

Belongs to the glycosyltransferase 4 family. MraY subfamily. It depends on Mg(2+) as a cofactor.

Its subcellular location is the cell inner membrane. It carries out the reaction UDP-N-acetyl-alpha-D-muramoyl-L-alanyl-gamma-D-glutamyl-meso-2,6-diaminopimeloyl-D-alanyl-D-alanine + di-trans,octa-cis-undecaprenyl phosphate = di-trans,octa-cis-undecaprenyl diphospho-N-acetyl-alpha-D-muramoyl-L-alanyl-D-glutamyl-meso-2,6-diaminopimeloyl-D-alanyl-D-alanine + UMP. It participates in cell wall biogenesis; peptidoglycan biosynthesis. Its function is as follows. Catalyzes the initial step of the lipid cycle reactions in the biosynthesis of the cell wall peptidoglycan: transfers peptidoglycan precursor phospho-MurNAc-pentapeptide from UDP-MurNAc-pentapeptide onto the lipid carrier undecaprenyl phosphate, yielding undecaprenyl-pyrophosphoryl-MurNAc-pentapeptide, known as lipid I. The chain is Phospho-N-acetylmuramoyl-pentapeptide-transferase from Erythrobacter litoralis (strain HTCC2594).